Here is a 296-residue protein sequence, read N- to C-terminus: Homoserine kinase (296 aa).

84–94 serves as a coordination point for ATP; it reads PLARGLGSSSS.

The protein belongs to the GHMP kinase family. Homoserine kinase subfamily.

It localises to the cytoplasm. The enzyme catalyses L-homoserine + ATP = O-phospho-L-homoserine + ADP + H(+). The protein operates within amino-acid biosynthesis; L-threonine biosynthesis; L-threonine from L-aspartate: step 4/5. In terms of biological role, catalyzes the ATP-dependent phosphorylation of L-homoserine to L-homoserine phosphate. This is Homoserine kinase from Lactococcus lactis subsp. cremoris (strain SK11).